The sequence spans 281 residues: NAD-dependent protein deacetylase 3 (281 aa).

Positions 1–281 (MLDSPTLDLL…PWLAEQLITR (281 aa)) constitute a Deacetylase sirtuin-type domain. Residues 27 to 47 (GAGISTASGIPDYRDKDGVRR) and 105 to 108 (QNVD) contribute to the NAD(+) site. His-123 functions as the Proton acceptor in the catalytic mechanism. Zn(2+) contacts are provided by Cys-131, Cys-134, Cys-182, and Cys-185. NAD(+) contacts are provided by residues 223–225 (GTS), 249–251 (NHG), and Cys-267.

This sequence belongs to the sirtuin family. Class II subfamily. Zn(2+) serves as cofactor.

The protein localises to the cytoplasm. The catalysed reaction is N(6)-acetyl-L-lysyl-[protein] + NAD(+) + H2O = 2''-O-acetyl-ADP-D-ribose + nicotinamide + L-lysyl-[protein]. NAD-dependent protein deacetylase which modulates the activities of several enzymes which are inactive in their acetylated form. This is NAD-dependent protein deacetylase 3 from Pseudomonas syringae pv. tomato (strain ATCC BAA-871 / DC3000).